Reading from the N-terminus, the 120-residue chain is Dihydroneopterin triphosphate 2'-epimerase (120 aa).

The protein belongs to the DHNA family. Homooctamer.

The catalysed reaction is 7,8-dihydroneopterin 3'-triphosphate = 7,8-dihydromonapterin 3'-triphosphate. Catalyzes the epimerization of carbon 2' of the side chain of 7,8-dihydroneopterin triphosphate (H2NTP) to form 7,8-dihydromonapterin triphosphate (H2MTP). Is required for tetrahydromonapterin biosynthesis. This is Dihydroneopterin triphosphate 2'-epimerase (folX) from Escherichia coli O157:H7.